A 284-amino-acid polypeptide reads, in one-letter code: uncharacterized protein (284 aa).

This sequence belongs to the methyltransferase superfamily.

Its subcellular location is the cytoplasm. The protein localises to the nucleus. Functionally, probable methyltransferase. This is an uncharacterized protein from Schizosaccharomyces pombe (strain 972 / ATCC 24843) (Fission yeast).